The chain runs to 415 residues: Thyroxine-binding globulin (415 aa).

The first 20 residues, 1–20 (MSPFLYLVLLVLGLHATIHC), serve as a signal peptide directing secretion. Residue N36 is glycosylated (N-linked (GlcNAc...) (complex) asparagine). N-linked (GlcNAc...) asparagine glycosylation occurs at N99. An N-linked (GlcNAc...) asparagine; in variant Gary glycan is attached at I116. 2 N-linked (GlcNAc...) asparagine glycosylation sites follow: N165 and N253. Thyroxine is bound by residues N293 and R398.

Belongs to the serpin family. In terms of tissue distribution, expressed by the liver and secreted in plasma.

The protein resides in the secreted. In terms of biological role, major thyroid hormone transport protein in serum. The chain is Thyroxine-binding globulin (SERPINA7) from Homo sapiens (Human).